Here is a 616-residue protein sequence, read N- to C-terminus: Dihydroxy-acid dehydratase (616 aa).

Position 81 (Asp-81) interacts with Mg(2+). [2Fe-2S] cluster is bound at residue Cys-122. Mg(2+) contacts are provided by Asp-123 and Lys-124. Lys-124 bears the N6-carboxylysine mark. Cys-195 is a binding site for [2Fe-2S] cluster. Position 491 (Glu-491) interacts with Mg(2+). Catalysis depends on Ser-517, which acts as the Proton acceptor.

The protein belongs to the IlvD/Edd family. In terms of assembly, homodimer. [2Fe-2S] cluster is required as a cofactor. It depends on Mg(2+) as a cofactor.

It carries out the reaction (2R)-2,3-dihydroxy-3-methylbutanoate = 3-methyl-2-oxobutanoate + H2O. The catalysed reaction is (2R,3R)-2,3-dihydroxy-3-methylpentanoate = (S)-3-methyl-2-oxopentanoate + H2O. It functions in the pathway amino-acid biosynthesis; L-isoleucine biosynthesis; L-isoleucine from 2-oxobutanoate: step 3/4. The protein operates within amino-acid biosynthesis; L-valine biosynthesis; L-valine from pyruvate: step 3/4. Its function is as follows. Functions in the biosynthesis of branched-chain amino acids. Catalyzes the dehydration of (2R,3R)-2,3-dihydroxy-3-methylpentanoate (2,3-dihydroxy-3-methylvalerate) into 2-oxo-3-methylpentanoate (2-oxo-3-methylvalerate) and of (2R)-2,3-dihydroxy-3-methylbutanoate (2,3-dihydroxyisovalerate) into 2-oxo-3-methylbutanoate (2-oxoisovalerate), the penultimate precursor to L-isoleucine and L-valine, respectively. The protein is Dihydroxy-acid dehydratase of Escherichia coli O127:H6 (strain E2348/69 / EPEC).